The primary structure comprises 77 residues: uncharacterized protein (77 aa).

A run of 2 helical transmembrane segments spans residues 3–23 (FNFI…SFLF) and 35–55 (IGAI…VALL).

The protein localises to the cell membrane. This is an uncharacterized protein from Haemophilus influenzae (strain ATCC 51907 / DSM 11121 / KW20 / Rd).